A 268-amino-acid polypeptide reads, in one-letter code: Hydroxyethylthiazole kinase (268 aa).

Residue Met-49 coordinates substrate. Residues Lys-124 and Thr-168 each coordinate ATP. Residue Ala-195 coordinates substrate.

The protein belongs to the Thz kinase family. Mg(2+) serves as cofactor.

It catalyses the reaction 5-(2-hydroxyethyl)-4-methylthiazole + ATP = 4-methyl-5-(2-phosphooxyethyl)-thiazole + ADP + H(+). The protein operates within cofactor biosynthesis; thiamine diphosphate biosynthesis; 4-methyl-5-(2-phosphoethyl)-thiazole from 5-(2-hydroxyethyl)-4-methylthiazole: step 1/1. In terms of biological role, catalyzes the phosphorylation of the hydroxyl group of 4-methyl-5-beta-hydroxyethylthiazole (THZ). In Archaeoglobus fulgidus (strain ATCC 49558 / DSM 4304 / JCM 9628 / NBRC 100126 / VC-16), this protein is Hydroxyethylthiazole kinase.